A 325-amino-acid chain; its full sequence is D-alanine--D-alanine ligase (325 aa).

One can recognise an ATP-grasp domain in the interval 107-311 (KRLLLSESLP…YEALCVEVLK (205 aa)). 137–192 (VDTLGLPLIVKPAREGSSLGLSKVTERAAMAAAVALAEKMDADILCEQFISGDEVT) provides a ligand contact to ATP. Mg(2+) contacts are provided by Asp-264, Glu-278, and Asn-280.

The protein belongs to the D-alanine--D-alanine ligase family. Mg(2+) is required as a cofactor. Mn(2+) serves as cofactor.

It localises to the cytoplasm. The catalysed reaction is 2 D-alanine + ATP = D-alanyl-D-alanine + ADP + phosphate + H(+). The protein operates within cell wall biogenesis; peptidoglycan biosynthesis. Cell wall formation. The chain is D-alanine--D-alanine ligase from Polaromonas naphthalenivorans (strain CJ2).